Consider the following 370-residue polypeptide: Phosphoserine aminotransferase (370 aa).

Arginine 42 provides a ligand contact to L-glutamate. Tryptophan 108, threonine 158, aspartate 182, and glutamine 205 together coordinate pyridoxal 5'-phosphate. Lysine 206 carries the post-translational modification N6-(pyridoxal phosphate)lysine. 247–248 (NT) contributes to the pyridoxal 5'-phosphate binding site.

The protein belongs to the class-V pyridoxal-phosphate-dependent aminotransferase family. SerC subfamily. In terms of assembly, homodimer. The cofactor is pyridoxal 5'-phosphate.

The protein resides in the cytoplasm. It carries out the reaction O-phospho-L-serine + 2-oxoglutarate = 3-phosphooxypyruvate + L-glutamate. It catalyses the reaction 4-(phosphooxy)-L-threonine + 2-oxoglutarate = (R)-3-hydroxy-2-oxo-4-phosphooxybutanoate + L-glutamate. It participates in amino-acid biosynthesis; L-serine biosynthesis; L-serine from 3-phospho-D-glycerate: step 2/3. It functions in the pathway cofactor biosynthesis; pyridoxine 5'-phosphate biosynthesis; pyridoxine 5'-phosphate from D-erythrose 4-phosphate: step 3/5. Catalyzes the reversible conversion of 3-phosphohydroxypyruvate to phosphoserine and of 3-hydroxy-2-oxo-4-phosphonooxybutanoate to phosphohydroxythreonine. This is Phosphoserine aminotransferase from Albidiferax ferrireducens (strain ATCC BAA-621 / DSM 15236 / T118) (Rhodoferax ferrireducens).